A 1377-amino-acid polypeptide reads, in one-letter code: Zinc finger MYM-type protein 2 (1377 aa).

Glycyl lysine isopeptide (Lys-Gly) (interchain with G-Cter in SUMO2) cross-links involve residues Lys-48, Lys-88, Lys-98, and Lys-104. Composition is skewed to polar residues over residues Thr-85–Glu-115 and Thr-127–Phe-138. A disordered region spans residues Thr-85–Glu-177. Residues Ile-139–Asp-152 show a composition bias toward basic and acidic residues. Residue Lys-147 forms a Glycyl lysine isopeptide (Lys-Gly) (interchain with G-Cter in SUMO2) linkage. The span at Val-153–Lys-164 shows a compositional bias: polar residues. Phosphoserine is present on Ser-159. Residues Lys-253 and Lys-297 each participate in a glycyl lysine isopeptide (Lys-Gly) (interchain with G-Cter in SUMO2) cross-link. Residues Asn-273 to Ser-305 form a disordered region. Residues Ser-284–Gln-298 are compositionally biased toward polar residues. Ser-305 carries the post-translational modification Phosphoserine. Glycyl lysine isopeptide (Lys-Gly) (interchain with G-Cter in SUMO2) cross-links involve residues Lys-312, Lys-325, Lys-348, and Lys-366. An MYM-type 1 zinc finger spans residues Val-327–Phe-363. An MYM-type 2 zinc finger spans residues Pro-369–Tyr-409. Glycyl lysine isopeptide (Lys-Gly) (interchain with G-Cter in SUMO2) cross-links involve residues Lys-417, Lys-441, Lys-491, Lys-503, Lys-513, Lys-529, and Lys-532. 2 consecutive MYM-type zinc fingers follow at residues Asn-421–Tyr-456 and Ile-463–Tyr-502. The MYM-type 5 zinc-finger motif lies at Leu-533–His-570. Glycyl lysine isopeptide (Lys-Gly) (interchain with G-Cter in SUMO2) cross-links involve residues Lys-576, Lys-603, Lys-649, Lys-658, Lys-688, Lys-700, and Lys-709. An MYM-type 6 zinc finger spans residues Gln-636–Tyr-671. 2 MYM-type zinc fingers span residues Arg-723–Phe-758 and Lys-764–Phe-799. Residues Lys-764, Lys-788, Lys-812, and Lys-829 each participate in a glycyl lysine isopeptide (Lys-Gly) (interchain with G-Cter in SUMO2) cross-link. Ser-838 and Ser-958 each carry phosphoserine. 2 disordered regions span residues Leu-983–Pro-1002 and Val-1028–Ser-1064. The span at Pro-1039–Ala-1050 shows a compositional bias: basic residues. Ser-1064 carries the post-translational modification Phosphoserine. A Phosphothreonine modification is found at Thr-1376.

As to quaternary structure, may be a component of a BHC histone deacetylase complex that contains HDAC1, HDAC2, HMG20B/BRAF35, KDM1A, RCOR1/CoREST, PHF21A/BHC80, ZNF198, ZNF217, ZMYM3, GSE1 and GTF2I.

Its subcellular location is the nucleus. Its function is as follows. May function as a transcription factor. This chain is Zinc finger MYM-type protein 2 (ZMYM2), found in Pongo abelii (Sumatran orangutan).